The sequence spans 245 residues: 1-(5-phosphoribosyl)-5-[(5-phosphoribosylamino)methylideneamino] imidazole-4-carboxamide isomerase (245 aa).

Residue Asp7 is the Proton acceptor of the active site. The active-site Proton donor is Asp129.

It belongs to the HisA/HisF family.

It localises to the cytoplasm. The enzyme catalyses 1-(5-phospho-beta-D-ribosyl)-5-[(5-phospho-beta-D-ribosylamino)methylideneamino]imidazole-4-carboxamide = 5-[(5-phospho-1-deoxy-D-ribulos-1-ylimino)methylamino]-1-(5-phospho-beta-D-ribosyl)imidazole-4-carboxamide. It functions in the pathway amino-acid biosynthesis; L-histidine biosynthesis; L-histidine from 5-phospho-alpha-D-ribose 1-diphosphate: step 4/9. The sequence is that of 1-(5-phosphoribosyl)-5-[(5-phosphoribosylamino)methylideneamino] imidazole-4-carboxamide isomerase from Escherichia coli O45:K1 (strain S88 / ExPEC).